The following is a 100-amino-acid chain: Integration host factor subunit beta (100 aa).

It belongs to the bacterial histone-like protein family. In terms of assembly, heterodimer of an alpha and a beta chain.

Functionally, this protein is one of the two subunits of integration host factor, a specific DNA-binding protein that functions in genetic recombination as well as in transcriptional and translational control. The chain is Integration host factor subunit beta from Rhodospirillum rubrum (strain ATCC 11170 / ATH 1.1.1 / DSM 467 / LMG 4362 / NCIMB 8255 / S1).